Reading from the N-terminus, the 103-residue chain is Small ribosomal subunit protein uS10 (103 aa).

This sequence belongs to the universal ribosomal protein uS10 family. In terms of assembly, part of the 30S ribosomal subunit.

Its function is as follows. Involved in the binding of tRNA to the ribosomes. This is Small ribosomal subunit protein uS10 from Bordetella avium (strain 197N).